The sequence spans 119 residues: Putative arsenical resistance operon repressor ArsR2 (119 aa).

An HTH arsR-type domain is found at 24–119 (VDSDAMATDL…TLDDLRGNHE (96 aa)). The segment at residues 60 to 83 (VCDLEATVGVSQSAVSQALSRLYT) is a DNA-binding region (H-T-H motif).

Functionally, transcriptional repressor for the arsR2M operon. This is Putative arsenical resistance operon repressor ArsR2 (arsR2) from Halobacterium salinarum (strain ATCC 700922 / JCM 11081 / NRC-1) (Halobacterium halobium).